The primary structure comprises 123 residues: Large ribosomal subunit protein bL19 (123 aa).

This sequence belongs to the bacterial ribosomal protein bL19 family.

In terms of biological role, this protein is located at the 30S-50S ribosomal subunit interface and may play a role in the structure and function of the aminoacyl-tRNA binding site. The polypeptide is Large ribosomal subunit protein bL19 (Ureaplasma urealyticum serovar 10 (strain ATCC 33699 / Western)).